The chain runs to 119 residues: Immunoglobulin heavy variable 2-26 (119 aa).

Positions 1 to 19 (MDTLCYTLLLLTTPSWVLS) are cleaved as a signal peptide. Pyrrolidone carboxylic acid is present on Q20. The segment at 20–44 (QVTLKESGPVLVKPTETLTLTCTVS) is framework-1. The Ig-like domain occupies 20–119 (QVTLKESGPV…DTATYYCARI (100 aa)). C41 and C116 form a disulfide bridge. Residues 45–54 (GFSLSNARMG) form a complementarity-determining-1 region. The interval 55–71 (VSWIRQPPGKALEWLAH) is framework-2. Residues 72 to 78 (IFSNDEK) are complementarity-determining-2. The interval 79 to 116 (SYSTSLKSRLTISKDTSKSQVVLTMTNMDPVDTATYYC) is framework-3. A complementarity-determining-3 region spans residues 117-119 (ARI).

As to quaternary structure, immunoglobulins are composed of two identical heavy chains and two identical light chains; disulfide-linked.

Its subcellular location is the secreted. It is found in the cell membrane. V region of the variable domain of immunoglobulin heavy chains that participates in the antigen recognition. Immunoglobulins, also known as antibodies, are membrane-bound or secreted glycoproteins produced by B lymphocytes. In the recognition phase of humoral immunity, the membrane-bound immunoglobulins serve as receptors which, upon binding of a specific antigen, trigger the clonal expansion and differentiation of B lymphocytes into immunoglobulins-secreting plasma cells. Secreted immunoglobulins mediate the effector phase of humoral immunity, which results in the elimination of bound antigens. The antigen binding site is formed by the variable domain of one heavy chain, together with that of its associated light chain. Thus, each immunoglobulin has two antigen binding sites with remarkable affinity for a particular antigen. The variable domains are assembled by a process called V-(D)-J rearrangement and can then be subjected to somatic hypermutations which, after exposure to antigen and selection, allow affinity maturation for a particular antigen. This chain is Immunoglobulin heavy variable 2-26, found in Homo sapiens (Human).